The chain runs to 256 residues: Follistatin-related protein 3 (256 aa).

The N-terminal stretch at 1 to 23 (MRPGALWPLLWGALVWAVGSVGA) is a signal peptide. Residues 34–105 (GVCWLQQGKE…SCDGVECGPG (72 aa)) enclose the TB domain. Disulfide bonds link Cys-36–Cys-59, Cys-46–Cys-90, Cys-60–Cys-93, Cys-97–Cys-108, Cys-102–Cys-117, Cys-119–Cys-151, Cys-123–Cys-144, and Cys-133–Cys-165. A glycan (N-linked (GlcNAc...) asparagine) is linked at Asn-71. The region spanning 97 to 117 (CDGVECGPGKACRMLGGRPHC) is the Follistatin-like 1 domain. Kazal-like domains are found at residues 111–167 (LGGR…RCQK) and 187–243 (SAHC…ICTG). The region spanning 168–191 (SCAQVVCPRPQSCLVDQTGSAHCV) is the Follistatin-like 2 domain. 3 disulfides stabilise this stretch: Cys-193/Cys-227, Cys-198/Cys-220, and Cys-209/Cys-241. A glycan (N-linked (GlcNAc...) asparagine) is linked at Asn-213.

Interacts with INHBA and INHBB. Interacts with FN1. Interacts with ADAM12. Interacts with MLLT10; the interaction enhances MLLT10 in vitro transcriptional activity and self-association. Interacts with MSTN.

It localises to the secreted. The protein localises to the nucleus. The secreted form is a binding and antagonizing protein for members of the TGF-beta family, such as activin, BMP2 and MSTN. Inhibits activin A-, activin B-, BMP2- and MSDT-induced cellular signaling; more effective on activin A than on activin B. Involved in bone formation; inhibits osteoclast differentiation. Involved in hematopoiesis; involved in differentiation of hemopoietic progenitor cells, increases hematopoietic cell adhesion to fibronectin and seems to contribute to the adhesion of hematopoietic precursor cells to the bone marrow stroma. The nuclear form is probably involved in transcriptional regulation via interaction with MLLT10. This chain is Follistatin-related protein 3 (Fstl3), found in Rattus norvegicus (Rat).